The primary structure comprises 311 residues: Coproporphyrin III ferrochelatase (311 aa).

Residues Tyr-12, Arg-29, 45-46 (RY), Ser-53, and Tyr-124 contribute to the Fe-coproporphyrin III site. Residues His-182 and Glu-263 each coordinate Fe(2+).

Belongs to the ferrochelatase family.

The protein resides in the cytoplasm. It carries out the reaction Fe-coproporphyrin III + 2 H(+) = coproporphyrin III + Fe(2+). The protein operates within porphyrin-containing compound metabolism; protoheme biosynthesis. Its function is as follows. Involved in coproporphyrin-dependent heme b biosynthesis. Catalyzes the insertion of ferrous iron into coproporphyrin III to form Fe-coproporphyrin III. This is Coproporphyrin III ferrochelatase from Bacillus mycoides (strain KBAB4) (Bacillus weihenstephanensis).